We begin with the raw amino-acid sequence, 534 residues long: 26S proteasome non-ATPase regulatory subunit 3 (534 aa).

Positions 1-16 are enriched in basic and acidic residues; that stretch reads MKQEGSARRRGADKAK. Positions 1 to 69 are disordered; the sequence is MKQEGSARRR…AEHSQRELDT (69 aa). Over residues 17 to 32 the composition is skewed to pro residues; the sequence is PPPGGGEQEPPPPPAP. A Glycyl lysine isopeptide (Lys-Gly) (interchain with G-Cter in SUMO1); alternate cross-link involves residue lysine 38. Residue lysine 38 forms a Glycyl lysine isopeptide (Lys-Gly) (interchain with G-Cter in SUMO2); alternate linkage. In terms of domain architecture, PCI spans 286-465; sequence ARYLYYTGRI…GYVQSKEMID (180 aa). Residues serine 418 and serine 430 each carry the phosphoserine modification. Residues 500-534 are disordered; that stretch reads SYNKDLESAEERREREQQDLEFAKEMAEDDDDSFP. Residues 501–525 are compositionally biased toward basic and acidic residues; that stretch reads YNKDLESAEERREREQQDLEFAKEM.

This sequence belongs to the proteasome subunit S3 family. As to quaternary structure, component of the 19S proteasome regulatory particle complex. The 26S proteasome consists of a 20S core particle (CP) and two 19S regulatory subunits (RP). The regulatory particle is made of a lid composed of 9 subunits including PSMD3, a base containing 6 ATPases and few additional components. Interacts with UBQLN1 (via ubiquitin-like domain). Interacts with ERCC6.

Its function is as follows. Component of the 26S proteasome, a multiprotein complex involved in the ATP-dependent degradation of ubiquitinated proteins. This complex plays a key role in the maintenance of protein homeostasis by removing misfolded or damaged proteins, which could impair cellular functions, and by removing proteins whose functions are no longer required. Therefore, the proteasome participates in numerous cellular processes, including cell cycle progression, apoptosis, or DNA damage repair. The chain is 26S proteasome non-ATPase regulatory subunit 3 (PSMD3) from Homo sapiens (Human).